A 295-amino-acid polypeptide reads, in one-letter code: Movement protein (295 aa).

The segment at 256-295 is disordered; sequence KKTNVKEESPTSDPQSGEVSSMTQSVPGAADTRIPKPRRR. Residues 266-281 are compositionally biased toward polar residues; the sequence is TSDPQSGEVSSMTQSV.

The protein belongs to the bromovirus movement protein family.

The protein resides in the host cell junction. It localises to the host plasmodesma. Transports viral genome to neighboring plant cells directly through plasmosdesmata, without any budding. The movement protein allows efficient cell to cell propagation, by bypassing the host cell wall barrier. Acts by forming a tubular structure at the host plasmodesmata, enlarging it enough to allow free passage of virion capsids. The protein is Movement protein of Broad bean mottle virus.